We begin with the raw amino-acid sequence, 311 residues long: MTKLIFMGTPDFSATVLKGLLTDDRYEILAVVTQPDRAVGRKKVIQETPVKQAAKEAGLSIYQPEKLSGSPEMEELMKLGADGIVTAAFGQFLPSKLLDSMDFAVNVHASLLPRHRGGAPIHYALIQGDEEAGVTIMEMVKEMDAGDMISRRSIPITDEDNVGTLFEKLALVGRDLLLDTLPAYIAGDIKPEPQDTSQVTFSPNIKPEEEKLDWNKTNRQLFNQIRGMNPWPVAHTFLKGDRFKIYEALPVEGQGNPGEILSIGKKELIVATAEGALSLKQVQPAGKPKMDIASFLNGVGRTLTVGERFGD.

110–113 (SLLP) serves as a coordination point for (6S)-5,6,7,8-tetrahydrofolate.

It belongs to the Fmt family.

The catalysed reaction is L-methionyl-tRNA(fMet) + (6R)-10-formyltetrahydrofolate = N-formyl-L-methionyl-tRNA(fMet) + (6S)-5,6,7,8-tetrahydrofolate + H(+). Attaches a formyl group to the free amino group of methionyl-tRNA(fMet). The formyl group appears to play a dual role in the initiator identity of N-formylmethionyl-tRNA by promoting its recognition by IF2 and preventing the misappropriation of this tRNA by the elongation apparatus. In Streptococcus pneumoniae (strain P1031), this protein is Methionyl-tRNA formyltransferase.